The primary structure comprises 843 residues: Glycogen phosphorylase, brain form (843 aa).

Alanine 2 carries the post-translational modification N-acetylalanine. Serine 15 carries the post-translational modification Phosphoserine; by PHK; in form phosphorylase A. 3 residues coordinate AMP: aspartate 43, tyrosine 197, and arginine 310. At tyrosine 197 the chain carries Phosphotyrosine. Position 473 is a phosphotyrosine (tyrosine 473). Lysine 569 provides a ligand contact to pyridoxal 5'-phosphate. Residues 677–678 (TG) are pyridoxal 5'-phosphate. Lysine 681 is subject to N6-(pyridoxal phosphate)lysine.

The protein belongs to the glycogen phosphorylase family. In terms of assembly, homodimer. Dimers associate into a tetramer to form the enzymatically active phosphorylase A. The cofactor is pyridoxal 5'-phosphate. Phosphorylation of Ser-15 converts phosphorylase B (unphosphorylated) to phosphorylase A.

The catalysed reaction is [(1-&gt;4)-alpha-D-glucosyl](n) + phosphate = [(1-&gt;4)-alpha-D-glucosyl](n-1) + alpha-D-glucose 1-phosphate. With respect to regulation, activity of phosphorylase is controlled both by allosteric means (through the non-covalent binding of metabolites) and by covalent modification. Thus AMP allosterically activates, whereas ATP, ADP, and glucose-6-phosphate allosterically inhibit, phosphorylase B. Functionally, glycogen phosphorylase that regulates glycogen mobilization. Phosphorylase is an important allosteric enzyme in carbohydrate metabolism. Enzymes from different sources differ in their regulatory mechanisms and in their natural substrates. However, all known phosphorylases share catalytic and structural properties. The protein is Glycogen phosphorylase, brain form (PYGB) of Bos taurus (Bovine).